The following is a 207-amino-acid chain: Protein GrpE (207 aa).

Composition is skewed to basic and acidic residues over residues 1 to 11 and 57 to 66; these read MEENRDVKNEE and DLVKNQEEEN. A disordered region spans residues 1–66; the sequence is MEENRDVKNE…DLVKNQEEEN (66 aa).

Belongs to the GrpE family. Homodimer.

It is found in the cytoplasm. In terms of biological role, participates actively in the response to hyperosmotic and heat shock by preventing the aggregation of stress-denatured proteins, in association with DnaK and GrpE. It is the nucleotide exchange factor for DnaK and may function as a thermosensor. Unfolded proteins bind initially to DnaJ; upon interaction with the DnaJ-bound protein, DnaK hydrolyzes its bound ATP, resulting in the formation of a stable complex. GrpE releases ADP from DnaK; ATP binding to DnaK triggers the release of the substrate protein, thus completing the reaction cycle. Several rounds of ATP-dependent interactions between DnaJ, DnaK and GrpE are required for fully efficient folding. This chain is Protein GrpE, found in Clostridium beijerinckii (strain ATCC 51743 / NCIMB 8052) (Clostridium acetobutylicum).